The sequence spans 977 residues: Glutamate receptor 2 (977 aa).

A signal peptide spans 1–19 (MNKNLLVFGFLIFVKIGET). Over 20 to 621 (SKKFPLRAFV…FSFMEPLGMT (602 aa)) the chain is Extracellular. N-linked (GlcNAc...) asparagine glycans are attached at residues N36, N227, N291, N427, N532, and N566. A helical transmembrane segment spans residues 622 to 642 (IWIFTLSSYFGVSLTIFLVSW). The Cytoplasmic segment spans residues 643–695 (FSPYEKRIEFKRGEFTVTNEFTLYNSLWFTLAAFMQQGTDILPRAVSGRIASS). Residues 696 to 716 (CWWFFTLIIVSSYTANLAAFL) form a helical membrane-spanning segment. The Extracellular segment spans residues 717–898 (TLERMTPPIE…GTSSSLNLSK (182 aa)). N-linked (GlcNAc...) asparagine glycans are attached at residues N783 and N895. A helical transmembrane segment spans residues 899 to 919 (VAGIFYILLAGMVLSMCTALV). Over 920 to 977 (EFLFRKNKENREKERNRMRSSRPLKPGILASCERAKQKQLQNRRTKSEEVSTPRSTLF) the chain is Cytoplasmic. Positions 954–977 (AKQKQLQNRRTKSEEVSTPRSTLF) are disordered.

It belongs to the glutamate-gated ion channel (TC 1.A.10.1) family. In terms of tissue distribution, command interneurons of the locomotory control circuit (AIA, AIB, AVA, AVD, AVE, PVC, RIA, RIG and RIR) and motor neurons (AVG, M1, RMDD and RMDV).

It localises to the membrane. The protein resides in the postsynaptic cell membrane. Functionally, L-glutamate acts as an excitatory neurotransmitter at many synapses in the central nervous system. The postsynaptic actions of glutamate are mediated by a variety of receptors that are named according to their selective agonists. Required for response to mechanical and osmotic stimuli. In Caenorhabditis elegans, this protein is Glutamate receptor 2 (glr-2).